We begin with the raw amino-acid sequence, 216 residues long: MFAVLKTGGKQYKVQAGDMLRVEKLAADAGETVQFNEVLMLGGENTVVGAPFVKDAGVQAEVVDQIKGEKVINFVKRRRKHSSKRTKGHRQKLTLVKVTDILASGADKSGVKAAMGAGSVSATAVAAAAPKPTKKAAPAKAEKAEAAPAAGADDLKKLSGVGPALEKKLIEGGVTSFAQIAAWTEADVAAMDEKLSFKGRIEREGWIEQAKELAKG.

This sequence belongs to the bacterial ribosomal protein bL21 family. As to quaternary structure, part of the 50S ribosomal subunit. Contacts protein L20.

In terms of biological role, this protein binds to 23S rRNA in the presence of protein L20. This chain is Large ribosomal subunit protein bL21, found in Roseobacter denitrificans (strain ATCC 33942 / OCh 114) (Erythrobacter sp. (strain OCh 114)).